A 156-amino-acid polypeptide reads, in one-letter code: MKLLVLCVFAMMATLAVSRRYQFVQHQYIRKAFEVALKVEIIAGFDRTLVKWLRNHGRGLNENQRKVLYFVNRRYMQTHWQNYMLWIVKKTNALGRPPVVADYRALGAEIGRRIDMGYFYNFLKNRVMIPKYLPYMRRLNNMRPEDVPVANRNPGK.

An N-terminal signal peptide occupies residues 1-18 (MKLLVLCVFAMMATLAVS).

In terms of assembly, monomer. Homodimer. Molecules associate into dimers and then rapidly dissociate again. Interacts (as a monomer) with the egg vitelline layer protein VERL (via VERL repeats); each VERL chain can bind multiple copies of lysin. Sperm.

The protein resides in the cytoplasmic vesicle. Its subcellular location is the secretory vesicle. It is found in the acrosome lumen. Functionally, creates a 3 um hole in the egg vitelline layer through which the sperm passes. Does not have enzyme activity. Species-specific interaction between the sperm protein lysin and the egg protein VERL exposes a basic surface on lysin that may dissociate the egg vitelline layer via electrostatic repulsion. Plays a role in ensuring species-specific fertilization. This chain is Egg-lysin, found in Haliotis cracherodii (Black abalone).